The sequence spans 348 residues: S-adenosylmethionine:tRNA ribosyltransferase-isomerase (348 aa).

The protein belongs to the QueA family. In terms of assembly, monomer.

The protein resides in the cytoplasm. It carries out the reaction 7-aminomethyl-7-carbaguanosine(34) in tRNA + S-adenosyl-L-methionine = epoxyqueuosine(34) in tRNA + adenine + L-methionine + 2 H(+). Its pathway is tRNA modification; tRNA-queuosine biosynthesis. Transfers and isomerizes the ribose moiety from AdoMet to the 7-aminomethyl group of 7-deazaguanine (preQ1-tRNA) to give epoxyqueuosine (oQ-tRNA). The chain is S-adenosylmethionine:tRNA ribosyltransferase-isomerase from Alteromonas mediterranea (strain DSM 17117 / CIP 110805 / LMG 28347 / Deep ecotype).